The primary structure comprises 279 residues: Large ribosomal subunit protein uL5c (279 aa).

2 disordered regions span residues 1-23 and 40-63; these read MAAT…TASS and LRVA…SPSG. Residues 1-43 constitute a chloroplast transit peptide; it reads MAATAVTLPSSPAPFPVTTTASSSRNVRLLLRSPPPRRALRVA. The segment covering 41 to 50 has biased composition (low complexity); sequence RVAASAAADA. A compositionally biased stretch (pro residues) spans 51–60; it reads PPKPAPPPTS.

This sequence belongs to the universal ribosomal protein uL5 family. Part of the 50S ribosomal subunit; contacts the 5S rRNA.

Its subcellular location is the plastid. The protein resides in the chloroplast. In terms of biological role, binds 5S rRNA, forms part of the central protuberance of the 50S subunit. This chain is Large ribosomal subunit protein uL5c (RPL5), found in Oryza sativa subsp. japonica (Rice).